A 247-amino-acid polypeptide reads, in one-letter code: Ribosomal RNA small subunit methyltransferase G (247 aa).

S-adenosyl-L-methionine is bound by residues G84, F89, 136–137, and R155; that span reads AE.

The protein belongs to the methyltransferase superfamily. RNA methyltransferase RsmG family.

Its subcellular location is the cytoplasm. In terms of biological role, specifically methylates the N7 position of a guanine in 16S rRNA. This Prochlorococcus marinus (strain MIT 9313) protein is Ribosomal RNA small subunit methyltransferase G.